Reading from the N-terminus, the 197-residue chain is Ribonuclease HII (197 aa).

The RNase H type-2 domain occupies 9 to 197 (ELIAGVDEVG…APVKKALEQF (189 aa)). The a divalent metal cation site is built by Asp-15, Glu-16, and Asp-107.

The protein belongs to the RNase HII family. Requires Mn(2+) as cofactor. Mg(2+) is required as a cofactor.

It is found in the cytoplasm. The catalysed reaction is Endonucleolytic cleavage to 5'-phosphomonoester.. Functionally, endonuclease that specifically degrades the RNA of RNA-DNA hybrids. The sequence is that of Ribonuclease HII from Haemophilus influenzae (strain 86-028NP).